The primary structure comprises 456 residues: Bifunctional protein GlmU (456 aa).

The segment at 1 to 229 is pyrophosphorylase; sequence MTKKALSAVI…VMEVEGANNR (229 aa). Residues 11–14, K25, Q76, 81–82, 103–105, G140, E154, N169, and N227 each bind UDP-N-acetyl-alpha-D-glucosamine; these read LAAG, GT, and YGD. D105 contacts Mg(2+). Residue N227 coordinates Mg(2+). Positions 230–250 are linker; it reads LQLAALERYFQNKQASKLLLE. An N-acetyltransferase region spans residues 251 to 456; the sequence is GVMIYDPARF…QGWQRPIKKK (206 aa). 2 residues coordinate UDP-N-acetyl-alpha-D-glucosamine: R333 and K351. H363 (proton acceptor) is an active-site residue. UDP-N-acetyl-alpha-D-glucosamine-binding residues include Y366 and N377. Acetyl-CoA is bound by residues A380, 386–387, S405, A423, and R440; that span reads NY.

It in the N-terminal section; belongs to the N-acetylglucosamine-1-phosphate uridyltransferase family. In the C-terminal section; belongs to the transferase hexapeptide repeat family. Homotrimer. Requires Mg(2+) as cofactor.

The protein localises to the cytoplasm. It carries out the reaction alpha-D-glucosamine 1-phosphate + acetyl-CoA = N-acetyl-alpha-D-glucosamine 1-phosphate + CoA + H(+). It catalyses the reaction N-acetyl-alpha-D-glucosamine 1-phosphate + UTP + H(+) = UDP-N-acetyl-alpha-D-glucosamine + diphosphate. It participates in nucleotide-sugar biosynthesis; UDP-N-acetyl-alpha-D-glucosamine biosynthesis; N-acetyl-alpha-D-glucosamine 1-phosphate from alpha-D-glucosamine 6-phosphate (route II): step 2/2. The protein operates within nucleotide-sugar biosynthesis; UDP-N-acetyl-alpha-D-glucosamine biosynthesis; UDP-N-acetyl-alpha-D-glucosamine from N-acetyl-alpha-D-glucosamine 1-phosphate: step 1/1. Its pathway is bacterial outer membrane biogenesis; LPS lipid A biosynthesis. Functionally, catalyzes the last two sequential reactions in the de novo biosynthetic pathway for UDP-N-acetylglucosamine (UDP-GlcNAc). The C-terminal domain catalyzes the transfer of acetyl group from acetyl coenzyme A to glucosamine-1-phosphate (GlcN-1-P) to produce N-acetylglucosamine-1-phosphate (GlcNAc-1-P), which is converted into UDP-GlcNAc by the transfer of uridine 5-monophosphate (from uridine 5-triphosphate), a reaction catalyzed by the N-terminal domain. This is Bifunctional protein GlmU from Haemophilus influenzae (strain ATCC 51907 / DSM 11121 / KW20 / Rd).